Here is a 302-residue protein sequence, read N- to C-terminus: uncharacterized protein (302 aa).

The N-terminal stretch at 1-22 (MLVVFKRLGFIVSIFSLTFLSA) is a signal peptide. Residue cysteine 23 is the site of N-palmitoyl cysteine attachment. Cysteine 23 is lipidated: S-diacylglycerol cysteine.

It belongs to the MG067/MG068/MG395 family.

It localises to the cell membrane. This is an uncharacterized protein from Mycoplasma pneumoniae (strain ATCC 29342 / M129 / Subtype 1) (Mycoplasmoides pneumoniae).